Here is a 743-residue protein sequence, read N- to C-terminus: Threonine synthase-like 1 (743 aa).

At Lys281 the chain carries N6-acetyllysine. Residue Lys351 is modified to N6-(pyridoxal phosphate)lysine.

The protein belongs to the threonine synthase family. Pyridoxal 5'-phosphate is required as a cofactor.

This is Threonine synthase-like 1 (THNSL1) from Macaca fascicularis (Crab-eating macaque).